We begin with the raw amino-acid sequence, 402 residues long: Argininosuccinate synthase (402 aa).

Residues A10–S18 and A37 contribute to the ATP site. L-citrulline is bound by residues Y88 and S93. Position 118 (G118) interacts with ATP. Residues T120, N124, and D125 each coordinate L-aspartate. L-citrulline is bound at residue N124. 5 residues coordinate L-citrulline: R128, S179, S188, E264, and Y276.

This sequence belongs to the argininosuccinate synthase family. Type 1 subfamily. Homotetramer.

The protein localises to the cytoplasm. The catalysed reaction is L-citrulline + L-aspartate + ATP = 2-(N(omega)-L-arginino)succinate + AMP + diphosphate + H(+). It participates in amino-acid biosynthesis; L-arginine biosynthesis; L-arginine from L-ornithine and carbamoyl phosphate: step 2/3. The polypeptide is Argininosuccinate synthase (Alkalilimnicola ehrlichii (strain ATCC BAA-1101 / DSM 17681 / MLHE-1)).